The following is a 497-amino-acid chain: Cytochrome P450 CYP94D108 (497 aa).

A helical transmembrane segment spans residues 6–26; that stretch reads LLSLALLLLAAAAAAAFVLFP. Residue cysteine 439 participates in heme binding.

Belongs to the cytochrome P450 family. Mainly expressed in roots and, at low levels, in leaves, fruits and stems.

Its subcellular location is the membrane. Its pathway is steroid metabolism; cholesterol metabolism. Involved in the biosynthesis of spiroketal steroid and saponin natural products from cholesterol such as diosgenin and analogs (e.g. furostanol and spirostanol), plant defense compounds used as main precursors for the industrial production of steroid hormones. During the 5,6-spiroketalization of cholesterol, may catalyze the 27-monohydroxylation of furostanol-type steroid to an intermediate product that undergoes a stereospecific formation of the terminal heterocycle to yield diosgenin. This Paris polyphylla (Daiswa polyphylla) protein is Cytochrome P450 CYP94D108.